The following is a 233-amino-acid chain: Antilisterial bacteriocin subtilosin biosynthesis protein AlbG (233 aa).

The next 5 membrane-spanning stretches (helical) occupy residues 4 to 24 (STVF…FGWV), 46 to 66 (GLLA…LHYV), 116 to 136 (TYVM…FEIV), 145 to 165 (TPPI…LFYM), and 192 to 212 (IGWM…LAAI).

It localises to the cell membrane. In terms of biological role, involved in the production of the bacteriocin subtilosin. In Bacillus subtilis, this protein is Antilisterial bacteriocin subtilosin biosynthesis protein AlbG (albG).